Consider the following 227-residue polypeptide: UPF0173 metal-dependent hydrolase BC_4613 (227 aa).

It belongs to the UPF0173 family.

The sequence is that of UPF0173 metal-dependent hydrolase BC_4613 from Bacillus cereus (strain ATCC 14579 / DSM 31 / CCUG 7414 / JCM 2152 / NBRC 15305 / NCIMB 9373 / NCTC 2599 / NRRL B-3711).